A 202-amino-acid polypeptide reads, in one-letter code: Holliday junction resolvase RecU (202 aa).

Positions 85, 87, 100, and 119 each coordinate Mg(2+).

Belongs to the RecU family. Mg(2+) serves as cofactor.

It is found in the cytoplasm. The enzyme catalyses Endonucleolytic cleavage at a junction such as a reciprocal single-stranded crossover between two homologous DNA duplexes (Holliday junction).. Its function is as follows. Endonuclease that resolves Holliday junction intermediates in genetic recombination. Cleaves mobile four-strand junctions by introducing symmetrical nicks in paired strands. Promotes annealing of linear ssDNA with homologous dsDNA. Required for DNA repair, homologous recombination and chromosome segregation. The chain is Holliday junction resolvase RecU from Streptococcus equi subsp. zooepidemicus (strain MGCS10565).